The primary structure comprises 456 residues: tRNA-2-methylthio-N(6)-dimethylallyladenosine synthase (456 aa).

The MTTase N-terminal domain occupies Glu18–Val136. Positions 27, 63, 97, 173, 177, and 180 each coordinate [4Fe-4S] cluster. The Radical SAM core domain maps to Arg159 to Asn391. In terms of domain architecture, TRAM spans Lys392 to Glu455.

Belongs to the methylthiotransferase family. MiaB subfamily. Monomer. [4Fe-4S] cluster serves as cofactor.

The protein localises to the cytoplasm. It catalyses the reaction N(6)-dimethylallyladenosine(37) in tRNA + (sulfur carrier)-SH + AH2 + 2 S-adenosyl-L-methionine = 2-methylsulfanyl-N(6)-dimethylallyladenosine(37) in tRNA + (sulfur carrier)-H + 5'-deoxyadenosine + L-methionine + A + S-adenosyl-L-homocysteine + 2 H(+). Catalyzes the methylthiolation of N6-(dimethylallyl)adenosine (i(6)A), leading to the formation of 2-methylthio-N6-(dimethylallyl)adenosine (ms(2)i(6)A) at position 37 in tRNAs that read codons beginning with uridine. The sequence is that of tRNA-2-methylthio-N(6)-dimethylallyladenosine synthase from Clostridium botulinum (strain Alaska E43 / Type E3).